Reading from the N-terminus, the 389-residue chain is MGTNLSVPNPLGFFPDHQLDPAFKANSENPDWDLNPNKDNWPDANKVGVGAFGPGFTPPHGGLLGWSPQAQGLLTTVPAAPPPASTNRQSGRQPTPLSPPLRDTHPQAMQWNSTTFHQTLQDPGVRALYFPAGGSSSGTVSPAQNTVSAISSILSKTGDPVPNMENIASGLLGPLLVLQAGFFLLTKILTIPQSLDSWWTSLNFLGGTPVCLGQNSQSQISSHSPTCCPPICPGYRWMCLRRFIIFLCILLLCLIFLLVLLDYQGMLPVCPLIPGSSTTSTGPCKTCTTPAQGTSMFPSCCCTKPTDGNCTCIPIPSSWAFAKYLWEWASVRFSWLSLLVPFVQWFVGLSPTVWLSVIWMIWFWGPSLYNILSPFMPLLPIFFCLWVYI.

At Met-1 the chain carries N-acetylmethionine. Gly-2 carries the N-myristoyl glycine; by host lipid modification. A pre-S1 region spans residues 2–108 (GTNLSVPNPL…PPLRDTHPQA (107 aa)). Residues 2–163 (GTNLSVPNPL…LSKTGDPVPN (162 aa)) are pre-S. Residues 2–170 (GTNLSVPNPL…VPNMENIASG (169 aa)) lie on the Virion surface; in external conformation side of the membrane. Over 2 to 242 (GTNLSVPNPL…PGYRWMCLRR (241 aa)) the chain is Intravirion; in internal conformation. Residues 74–103 (LTTVPAAPPPASTNRQSGRQPTPLSPPLRD) form a disordered region. Over residues 85-95 (STNRQSGRQPT) the composition is skewed to polar residues. The interval 109–163 (MQWNSTTFHQTLQDPGVRALYFPAGGSSSGTVSPAQNTVSAISSILSKTGDPVPN) is pre-S2. A helical transmembrane segment spans residues 171–191 (LLGPLLVLQAGFFLLTKILTI). Residues 192-242 (PQSLDSWWTSLNFLGGTPVCLGQNSQSQISSHSPTCCPPICPGYRWMCLRR) are Intravirion; in external conformation-facing. A helical transmembrane segment spans residues 243-263 (FIIFLCILLLCLIFLLVLLDY). Topologically, residues 264–337 (QGMLPVCPLI…WASVRFSWLS (74 aa)) are virion surface. Asn-309 is a glycosylation site (N-linked (GlcNAc...) asparagine; by host). The helical transmembrane segment at 338–358 (LLVPFVQWFVGLSPTVWLSVI) threads the bilayer. Residues 359 to 364 (WMIWFW) lie on the Intravirion side of the membrane. A helical membrane pass occupies residues 365-387 (GPSLYNILSPFMPLLPIFFCLWV). Over 388–389 (YI) the chain is Virion surface.

It belongs to the orthohepadnavirus major surface antigen family. In terms of assembly, interacts (via its myristoylated pre-S1 region) with the host SLC10A1/NTCP; this interaction is essential for viral entry. In its internal form (Li-HBsAg), interacts with the capsid protein and with the isoform S. Interacts with host chaperone CANX. As to quaternary structure, associates with host chaperone CANX through its pre-S2 N glycan; this association may be essential for isoform M proper secretion. In terms of assembly, interacts with isoform L. Interacts with the antigens of satellite virus HDV (HDVAgs); this interaction is required for encapsidation of HDV genomic RNA. Isoform M is N-terminally acetylated by host at a ratio of 90%, and N-glycosylated by host at the pre-S2 region. In terms of processing, myristoylated; this modification is essential for its interaction with the host protein SLC10A1/NTCP.

The protein resides in the virion membrane. Its function is as follows. The large envelope protein exists in two topological conformations, one which is termed 'external' or Le-HBsAg and the other 'internal' or Li-HBsAg. In its external conformation the protein attaches the virus to cell receptors and thereby initiating infection. This interaction determines the species specificity and liver tropism. This attachment induces virion internalization predominantly through caveolin-mediated endocytosis. The large envelope protein also assures fusion between virion membrane and endosomal membrane. In its internal conformation the protein plays a role in virion morphogenesis and mediates the contact with the nucleocapsid like a matrix protein. In terms of biological role, the middle envelope protein plays an important role in the budding of the virion. It is involved in the induction of budding in a nucleocapsid independent way. In this process the majority of envelope proteins bud to form subviral lipoprotein particles of 22 nm of diameter that do not contain a nucleocapsid. This Hepatitis B virus genotype B/C subtype adw (isolate Okinawa/pODW282/1998) (HBV-B) protein is Large envelope protein.